Reading from the N-terminus, the 328-residue chain is Stress response kinase A (328 aa).

Catalysis depends on aspartate 201, which acts as the Proton acceptor. 2 residues coordinate Mg(2+): asparagine 206 and aspartate 217. Aspartate 217 is an active-site residue.

This sequence belongs to the SrkA/RdoA protein kinase family. As to quaternary structure, monomer. Mg(2+) is required as a cofactor.

The protein localises to the cytoplasm. It carries out the reaction L-seryl-[protein] + ATP = O-phospho-L-seryl-[protein] + ADP + H(+). The enzyme catalyses L-threonyl-[protein] + ATP = O-phospho-L-threonyl-[protein] + ADP + H(+). In terms of biological role, a protein kinase that phosphorylates Ser and Thr residues. Probably acts to suppress the effects of stress linked to accumulation of reactive oxygen species. Probably involved in the extracytoplasmic stress response. The chain is Stress response kinase A from Escherichia coli O6:H1 (strain CFT073 / ATCC 700928 / UPEC).